A 409-amino-acid polypeptide reads, in one-letter code: Elongation factor Tu, chloroplastic (409 aa).

The region spanning 10–214 (KPHVNIGTIG…AVDTYIPTPE (205 aa)) is the tr-type G domain. Residues 19–26 (GHVDHGKT) are G1. 19-26 (GHVDHGKT) lines the GTP pocket. Thr26 contributes to the Mg(2+) binding site. The G2 stretch occupies residues 60-64 (GITIN). Positions 81–84 (DCPG) are G3. GTP is bound by residues 81–85 (DCPGH) and 136–139 (NKED). Positions 136-139 (NKED) are G4. The interval 174 to 176 (SAL) is G5.

The protein belongs to the TRAFAC class translation factor GTPase superfamily. Classic translation factor GTPase family. EF-Tu/EF-1A subfamily.

The protein resides in the plastid. It is found in the chloroplast. The enzyme catalyses GTP + H2O = GDP + phosphate + H(+). Functionally, GTP hydrolase that promotes the GTP-dependent binding of aminoacyl-tRNA to the A-site of ribosomes during protein biosynthesis. The sequence is that of Elongation factor Tu, chloroplastic (tufA) from Pyropia yezoensis (Susabi-nori).